The primary structure comprises 501 residues: MSCSATDLAVLLGPNATAAANYICGQLGDVNNKFIDTAFAIDNTYLLFSAYLVFSMQLGFAMLCAGSVRAKNTMNIMLTNVLDAAAGGLFYYLFGYAFAFGSPSNGFIGKHYFGLKDIPTASADYSNFLYQWAFAIAAAGITSGSIAERTQFVAYLIYSSFLTGFVYPVVSHWFWSVDGWASPFRTDGDLLFSTGAIDFAGSGVVHMVGGIAGLWGALIEGPRLGRFDNGGRAIALRGHSASLVVLGTFLLWFGWYGFNPGSFNKILVTYETGTYNGQWSAVGRTAVTTTLAGCTAALTTLFGKRLLSGHWNVTDVCNGLLGGFAAITGGCSVVEPWAAIICGFVAALVLLGCNKLAEKLKYDDPLEAAQLHGGCGAWGLIFTALFAQEKYLNQIYGNKPGRPHGLFMGGGGKLLGAQLIQIIVITGWVSATMGTLFFILKKMKLLRISSEDEMAGMDMTRHGGFAYMYFDDDESHKAIQLRRVEPRSPSPSGANTTPTPV.

10 consecutive transmembrane segments (helical) span residues 8–28 (LAVLLGPNATAAANYICGQLG), 46–66 (LLFSAYLVFSMQLGFAMLCAG), 81–101 (VLDAAAGGLFYYLFGYAFAFG), 128–148 (FLYQWAFAIAAAGITSGSIAE), 152–172 (FVAYLIYSSFLTGFVYPVVSH), 199–219 (FAGSGVVHMVGGIAGLWGALI), 243–263 (LVVLGTFLLWFGWYGFNPGSF), 333–353 (VVEPWAAIICGFVAALVLLGC), 366–386 (LEAAQLHGGCGAWGLIFTALF), and 419–439 (LIQIIVITGWVSATMGTLFFI). Threonine 460 is modified (phosphothreonine). 4 positions are modified to phosphoserine: serine 475, serine 488, serine 490, and serine 492.

It belongs to the ammonia transporter channel (TC 1.A.11.2) family. In terms of assembly, self interacts. Interacts with the receptor protein kinases CEPR2, At2g28990 and PAM74. Highly expressed in roots. Expressed in root tips, root hairs, root epidermis, rhizodermis, cortex and pericycle. Expressed in leaves epidermal and mesophyll cells.

Its subcellular location is the cell membrane. In terms of biological role, high affinity ammonium transporter probably involved in ammonium uptake from the soil, long-distance transport to the shoots and re-uptake of apoplastic ammonium that derives from photorespiration in shoots. Contributes with AMT1-3 to the overall ammonium uptake capacity in roots under nitrogen-deficiency conditions. The polypeptide is Ammonium transporter 1 member 1 (AMT1-1) (Arabidopsis thaliana (Mouse-ear cress)).